The sequence spans 206 residues: Ras-related protein Ral-B (206 aa).

Residue 21–29 coordinates GTP; that stretch reads GSGGVGKSA. The Effector region motif lies at 43–51; it reads YEPTKADSY. GTP-binding positions include 68–72, 128–131, and 158–160; these read DTAGQ, NKSD, and SAK. The segment covering 180–189 has biased composition (basic and acidic residues); the sequence is KMSENKDKNG. The disordered stretch occupies residues 180 to 206; that stretch reads KMSENKDKNGKKSGKNKKSFKERCCLL. A Cysteine methyl ester modification is found at C203. C203 carries the S-geranylgeranyl cysteine lipid modification. The propeptide at 204–206 is removed in mature form; that stretch reads CLL.

This sequence belongs to the small GTPase superfamily. Ras family. Interacts with EXOC2/Sec5 and EXOC8/Exo84. Interacts (via effector domain) with RALBP1. Prenylation is essential for membrane localization. In terms of processing, the farnesylated form confers resistance to the proapoptotic and anti-anchorage-dependent growth effects of some geranylgeranyltransferase I inhibitors.

Its subcellular location is the cell membrane. It is found in the midbody. The catalysed reaction is GTP + H2O = GDP + phosphate + H(+). With respect to regulation, alternates between an inactive form bound to GDP and an active form bound to GTP. Activated by a guanine nucleotide-exchange factor (GEF) and inactivated by a GTPase-activating protein (GAP). Its function is as follows. Multifunctional GTPase involved in a variety of cellular processes including gene expression, cell migration, cell proliferation, oncogenic transformation and membrane trafficking. Accomplishes its multiple functions by interacting with distinct downstream effectors. Acts as a GTP sensor for GTP-dependent exocytosis of dense core vesicles. Required both to stabilize the assembly of the exocyst complex and to localize functional exocyst complexes to the leading edge of migrating cells. Required for suppression of apoptosis. In late stages of cytokinesis, upon completion of the bridge formation between dividing cells, mediates exocyst recruitment to the midbody to drive abscission. Involved in ligand-dependent receptor mediated endocytosis of the EGF and insulin receptors. This is Ras-related protein Ral-B (RALB) from Macaca fascicularis (Crab-eating macaque).